The following is a 1252-amino-acid chain: DNA-directed RNA polymerase subunit beta (1252 aa).

Belongs to the RNA polymerase beta chain family. The RNAP catalytic core consists of 2 alpha, 1 beta, 1 beta' and 1 omega subunit. When a sigma factor is associated with the core the holoenzyme is formed, which can initiate transcription.

The enzyme catalyses RNA(n) + a ribonucleoside 5'-triphosphate = RNA(n+1) + diphosphate. In terms of biological role, DNA-dependent RNA polymerase catalyzes the transcription of DNA into RNA using the four ribonucleoside triphosphates as substrates. The chain is DNA-directed RNA polymerase subunit beta from Chlamydia muridarum (strain MoPn / Nigg).